The following is a 231-amino-acid chain: NADH-ubiquinone oxidoreductase chain 4 (231 aa).

The next 7 membrane-spanning stretches (helical) occupy residues 1–21 (PIAG…YGII), 34–54 (VFLP…LTCL), 61–80 (SLIA…AIII), 84–106 (WGLS…LFCL), 128–148 (ILPM…ATPP), 156–176 (LLII…LGLS), and 211–231 (LLMI…ELVI).

It belongs to the complex I subunit 4 family.

It is found in the mitochondrion membrane. It catalyses the reaction a ubiquinone + NADH + 5 H(+)(in) = a ubiquinol + NAD(+) + 4 H(+)(out). Functionally, core subunit of the mitochondrial membrane respiratory chain NADH dehydrogenase (Complex I) that is believed to belong to the minimal assembly required for catalysis. Complex I functions in the transfer of electrons from NADH to the respiratory chain. The immediate electron acceptor for the enzyme is believed to be ubiquinone. The sequence is that of NADH-ubiquinone oxidoreductase chain 4 (MT-ND4) from Tropidolaemus wagleri (Wagler's pit viper).